A 421-amino-acid chain; its full sequence is Outer capsid protein P8 (421 aa).

The protein belongs to the phytoreovirus outer capsid protein P8 family. In terms of assembly, homotrimer. Homomultimer. Interacts with host peroxisomal glycolate oxidase (GOX). This interaction mediates its relocation to virus factories peripheral to host peroxisomes.

The protein localises to the virion. The protein resides in the host cytoplasm. Capsid protein which self-assembles to form the outer icosahedral capsid with a T=13 symmetry, about 70 nm in diameter and consisting of 780 molecules capsid proteins. The protein is Outer capsid protein P8 of Alopecurus aequalis (Barnyard grass).